The chain runs to 142 residues: NCT transcriptional regulatory complex subunit B (142 aa).

The protein belongs to the NC2 beta/DR1 family. As to quaternary structure, forms the NCT transcriptional regulatory complex with nctA and mot1.

The protein resides in the nucleus. In terms of biological role, part of the NCT transcriptional regulatory complex that acts as a key regulator of ergosterol biosynthesis and the azole exporter cdr1B. The NCT complex binds the promoters of genes linked to azole susceptibility, and especially represses the expression of cdr1B transporter. This Aspergillus fumigatus (strain CBS 144.89 / FGSC A1163 / CEA10) (Neosartorya fumigata) protein is NCT transcriptional regulatory complex subunit B.